Consider the following 159-residue polypeptide: uncharacterized protein (159 aa).

Its subcellular location is the mitochondrion. This is an uncharacterized protein from Arabidopsis thaliana (Mouse-ear cress).